The sequence spans 194 residues: Cysteine and glycine-rich protein 2 (194 aa).

The region spanning 10 to 61 is the LIM zinc-binding 1 domain; that stretch reads CGACGRTVYHAEEVQCDGRSFHRCCFLCMVCRKNLDSTTVAIHDAEVYCKSC. Residues 64-69 carry the Nuclear localization signal motif; that stretch reads KKYGPK. The LIM zinc-binding 2 domain maps to 120–171; the sequence is CSRCGDSVYAAEKVIGAGKPWHKNCFRCAKCGKSLESTTLTEKEGEIYCKGC.

Its subcellular location is the nucleus. Its function is as follows. Totally down-regulated in transformed cells. May therefore take part in the control of cell growth and differentiation. This Gallus gallus (Chicken) protein is Cysteine and glycine-rich protein 2 (CSRP2).